The sequence spans 236 residues: 2-C-methyl-D-erythritol 4-phosphate cytidylyltransferase (236 aa).

Belongs to the IspD/TarI cytidylyltransferase family. IspD subfamily.

The enzyme catalyses 2-C-methyl-D-erythritol 4-phosphate + CTP + H(+) = 4-CDP-2-C-methyl-D-erythritol + diphosphate. It functions in the pathway isoprenoid biosynthesis; isopentenyl diphosphate biosynthesis via DXP pathway; isopentenyl diphosphate from 1-deoxy-D-xylulose 5-phosphate: step 2/6. Functionally, catalyzes the formation of 4-diphosphocytidyl-2-C-methyl-D-erythritol from CTP and 2-C-methyl-D-erythritol 4-phosphate (MEP). The chain is 2-C-methyl-D-erythritol 4-phosphate cytidylyltransferase from Pseudomonas syringae pv. tomato (strain ATCC BAA-871 / DC3000).